The chain runs to 425 residues: Serine--tRNA ligase (425 aa).

230–232 contributes to the L-serine binding site; the sequence is TAE. 261–263 lines the ATP pocket; sequence RSE. L-serine is bound at residue E284. An ATP-binding site is contributed by 348–351; that stretch reads EISS. S384 serves as a coordination point for L-serine.

The protein belongs to the class-II aminoacyl-tRNA synthetase family. Type-1 seryl-tRNA synthetase subfamily. As to quaternary structure, homodimer. The tRNA molecule binds across the dimer.

Its subcellular location is the cytoplasm. It carries out the reaction tRNA(Ser) + L-serine + ATP = L-seryl-tRNA(Ser) + AMP + diphosphate + H(+). It catalyses the reaction tRNA(Sec) + L-serine + ATP = L-seryl-tRNA(Sec) + AMP + diphosphate + H(+). It participates in aminoacyl-tRNA biosynthesis; selenocysteinyl-tRNA(Sec) biosynthesis; L-seryl-tRNA(Sec) from L-serine and tRNA(Sec): step 1/1. In terms of biological role, catalyzes the attachment of serine to tRNA(Ser). Is also able to aminoacylate tRNA(Sec) with serine, to form the misacylated tRNA L-seryl-tRNA(Sec), which will be further converted into selenocysteinyl-tRNA(Sec). This Streptococcus pyogenes serotype M49 (strain NZ131) protein is Serine--tRNA ligase.